Here is a 307-residue protein sequence, read N- to C-terminus: MKIDKEDDQQQQMRRVAFFAVAVSTAAVISSIVTLPMIYSYVQSFQSHLIMETEFCKTRARDMWVEMQVLHKSGVTRSRRDAGYKEGSGSGGSGSGGYGGPTGAGADIGPTCCPCQQGPAGPPGPAGDTGPNGNDGHHGAPGVPGKEGSILSSALPPSEPCIICPPGPQGAVGQQGPKGPPGPKGKSQERAADGKNGEPGMIGPPGPPGGVGEPGPPGPAGQPGRVIQVNGAAGPAGPRGVKGPPGPKGLPGIAGLTEIGGQGPPGDAGGPGPVGGQGPPGPQGPQGPPGDEGSCDHCPEPRTPPGY.

Disordered regions lie at residues 76 to 102 (TRSR…GGPT) and 116 to 307 (QQGP…PPGY). A compositionally biased stretch (gly residues) spans 86 to 102 (EGSGSGGSGSGGYGGPT). 6 triple-helical region regions span residues 89–105 (GSGG…TGAG), 118–150 (GPAG…EGSI), 167–187 (GPQG…KGKS), 194–226 (GKNG…PGRV), 231–257 (GAAG…AGLT), and 260–295 (GGQG…EGSC). A compositionally biased stretch (pro residues) spans 157-168 (PSEPCIICPPGP). A compositionally biased stretch (basic and acidic residues) spans 186-196 (KSQERAADGKN). Pro residues predominate over residues 202–220 (IGPPGPPGGVGEPGPPGPA). Residues 231 to 242 (GAAGPAGPRGVK) are compositionally biased toward low complexity. Residues 258 to 278 (EIGGQGPPGDAGGPGPVGGQG) show a composition bias toward gly residues. The segment covering 279–288 (PPGPQGPQGP) has biased composition (pro residues).

It belongs to the cuticular collagen family. As to quaternary structure, collagen polypeptide chains are complexed within the cuticle by disulfide bonds and other types of covalent cross-links.

Functionally, nematode cuticles are composed largely of collagen-like proteins. The cuticle functions both as an exoskeleton and as a barrier to protect the worm from its environment. The sequence is that of Cuticle collagen 36 (col-36) from Caenorhabditis elegans.